A 471-amino-acid chain; its full sequence is Eremophilane O-acetyltransferase ORF8 (471 aa).

It belongs to the fumigaclavine B O-acetyltransferase family. As to quaternary structure, monomer.

It participates in sesquiterpene biosynthesis. Its function is as follows. O-acetyltransferase; part of the gene cluster that mediates the biosynthesis of PR-toxin, a bicyclic sesquiterpene belonging to the eremophilane class and acting as a mycotoxin. The first step of the pathway is catalyzed by the aristolochene synthase which performs the cyclization of trans,trans-farnesyl diphosphate (FPP) to the bicyclic sesquiterpene aristolochene. Following the formation of aristolochene, the non-oxygenated aristolochene is converted to the trioxygenated intermediate eremofortin B, via 7-epi-neopetasone. This conversion appears to involve three enzymes, a hydroxysterol oxidase-like enzyme, the quinone-oxidase prx3 that forms the quinone-type-structure in the bicyclic nucleus of aristolochene with the C8-oxo group and the C-3 hydroxyl group, and the P450 monooxygenase ORF6 that introduces the epoxide at the double bond between carbons 1 and 2. No monoxy or dioxy-intermediates have been reported to be released to the broth, so these three early oxidative reactions may be coupled together. Eremofortin B is further oxidized by another P450 monooxygenase, that introduces a second epoxide between carbons 7 and 11 prior to acetylation to eremofortin A by the acetyltransferase ORF8. The second epoxidation may be performed by a second P450 monooxygenase. After the acetylation step, eremofortin A is converted to eremofortin C and then to PR-toxin. First the conversion of eremofortin A to eremofortin C proceeds by oxidation of the side chain of the molecule at C-12 and is catalyzed by the short-chain oxidoreductase prx1. The cytochrome P450 monooxygenase ORF6 is probably also involved in this step. The primary alcohol formed at C-12 is finally oxidized by the short-chain alcohol dehydrogenase prx4 that forms PR-toxin. In Penicillium roqueforti (strain FM164), this protein is Eremophilane O-acetyltransferase ORF8.